Consider the following 588-residue polypeptide: MYRWLAKVLGTILRLCERPAPGARALLKRRRSSSTLFSTAVDTDEIPAKRPRLDCFIHQVKNSLYNAASLFGFPFQLTTKPMVSSACNGTRNVAPSGEVFSNSSSCELMSSGSCSSMLKLGNKSPNGISDYPKIRVTVTRDQPRRVLPSFGFTLKSEGYNRRPSGRRHSKSNPESSLTWKPQEQGVTEMISEEGGKGVRRPHCTVEEGVQKDEREKYRKLLERLKEGAHGSTFPPTVSHHSSQRIQMDTLKTKGWVEEQNHGVRTTHFVPKQYRVVETRGPLCSMRSEKRYSKGKADTEKVVGLRFEKEGTRGHQMEPDLSEEVSARLRLGSGSNGLLRRKISVLEIKEKNFPSKEKDRRTEDLFEFTEDMEKEISNALGHGPPDEILSSAFKLRITRGDIQTLKNYHWLNDEVINFYMNLLVERSKKQGYPALHAFSTFFYPKLKSGGYQAVKRWTKGVNLFEQELVLVPIHRKVHWSLVVMDLRKKCLKYLDSMGQKGHRICEILLQYLQDESKTKRNTDLNLLEWTHYSMKPHEIPQQLNGSDCGMFTCKYADYISRDKPITFTQHQMPLFRKKMVWEILHQQLL.

Residues lysine 28–arginine 31 carry the Nuclear localization signal motif. The residue at position 32 (serine 32) is a Phosphoserine. Positions proline 47–arginine 52 match the Nuclear localization signal motif. The tract at residues glutamate 157–glutamine 184 is disordered. The segment covering asparagine 172–glutamine 184 has biased composition (polar residues). The short motif at methionine 316–glycine 331 is the Nuclear export signal element. Phosphoserine is present on residues serine 332 and serine 343. Residues leucine 394 to isoleucine 558 form a protease region. Catalysis depends on residues histidine 477 and aspartate 494. Residue cysteine 547 is the Nucleophile of the active site.

This sequence belongs to the peptidase C48 family. Binds to SUMO2 and SUMO3. Interacts with the C-terminal domain of NUP153 via its N-terminus. Interacts with MTA1. Post-translationally, polyubiquitinated; which leads to proteasomal degradation. As to expression, highly expressed in testis. Detected in brain, heart and thymus.

The protein localises to the nucleus. The protein resides in the nuclear pore complex. It is found in the nucleus membrane. Its subcellular location is the cytoplasm. It localises to the cytoplasmic vesicle. The protein localises to the PML body. Protease that catalyzes two essential functions in the SUMO pathway. The first is the hydrolysis of an alpha-linked peptide bond at the C-terminal end of the small ubiquitin-like modifier (SUMO) propeptides, SUMO1, SUMO2 and SUMO3 leading to the mature form of the proteins. The second is the deconjugation of SUMO1, SUMO2 and SUMO3 from targeted proteins, by cleaving an epsilon-linked peptide bond between the C-terminal glycine of the mature SUMO and the lysine epsilon-amino group of the target protein. May down-regulate CTNNB1 levels and thereby modulate the Wnt pathway. Deconjugates SUMO2 from MTA1. Plays a dynamic role in adipogenesis by desumoylating and promoting the stabilization of CEBPB. Acts as a regulator of the cGAS-STING pathway by catalyzing desumoylation of CGAS and STING1 during the late phase of viral infection. Its function is as follows. Activates transcription. This is Sentrin-specific protease 2 (Senp2) from Mus musculus (Mouse).